The following is a 130-amino-acid chain: Small ribosomal subunit protein uS11 (130 aa).

It belongs to the universal ribosomal protein uS11 family. In terms of assembly, part of the 30S ribosomal subunit. Interacts with proteins S7 and S18. Binds to IF-3.

Its function is as follows. Located on the platform of the 30S subunit, it bridges several disparate RNA helices of the 16S rRNA. Forms part of the Shine-Dalgarno cleft in the 70S ribosome. The chain is Small ribosomal subunit protein uS11 from Nitrobacter hamburgensis (strain DSM 10229 / NCIMB 13809 / X14).